Reading from the N-terminus, the 525-residue chain is Phosphoenolpyruvate carboxykinase (ATP) 1 (525 aa).

Positions 55, 190, and 196 each coordinate substrate. Residues Lys196, His215, and Gly231 to Thr239 each bind ATP. Mn(2+)-binding residues include Lys196 and His215. Asp252 lines the Mn(2+) pocket. Positions 280, 317, and 442 each coordinate ATP. Arg317 contacts substrate.

It belongs to the phosphoenolpyruvate carboxykinase (ATP) family. Mn(2+) serves as cofactor.

The protein resides in the cytoplasm. It catalyses the reaction oxaloacetate + ATP = phosphoenolpyruvate + ADP + CO2. It functions in the pathway carbohydrate biosynthesis; gluconeogenesis. In terms of biological role, involved in the gluconeogenesis. Catalyzes the conversion of oxaloacetate (OAA) to phosphoenolpyruvate (PEP) through direct phosphoryl transfer between the nucleoside triphosphate and OAA. This is Phosphoenolpyruvate carboxykinase (ATP) 1 from Moorella thermoacetica (strain ATCC 39073 / JCM 9320).